Consider the following 247-residue polypeptide: Small ribosomal subunit protein uS3 (247 aa).

Residues 39 to 107 (VRDYLRKKLD…PAQVNIEEIT (69 aa)) form the KH type-2 domain. The disordered stretch occupies residues 213–247 (SVYNPPKEDKTRAPKRRGRSNSNRRNSDRANTDRG). Residues 237–247 (RNSDRANTDRG) show a composition bias toward basic and acidic residues.

It belongs to the universal ribosomal protein uS3 family. In terms of assembly, part of the 30S ribosomal subunit. Forms a tight complex with proteins S10 and S14.

Functionally, binds the lower part of the 30S subunit head. Binds mRNA in the 70S ribosome, positioning it for translation. This chain is Small ribosomal subunit protein uS3, found in Psychrobacter sp. (strain PRwf-1).